Reading from the N-terminus, the 312-residue chain is Ornithine carbamoyltransferase (312 aa).

Residues 59–62 (STRT), Gln86, Arg110, and 137–140 (HPCQ) contribute to the carbamoyl phosphate site. L-ornithine is bound by residues Asn167, Asp231, and 235-236 (SM). Cys271 and Arg299 together coordinate carbamoyl phosphate.

It belongs to the aspartate/ornithine carbamoyltransferase superfamily. OTCase family.

The protein localises to the cytoplasm. The catalysed reaction is carbamoyl phosphate + L-ornithine = L-citrulline + phosphate + H(+). The protein operates within amino-acid biosynthesis; L-arginine biosynthesis; L-arginine from L-ornithine and carbamoyl phosphate: step 1/3. Functionally, reversibly catalyzes the transfer of the carbamoyl group from carbamoyl phosphate (CP) to the N(epsilon) atom of ornithine (ORN) to produce L-citrulline. The chain is Ornithine carbamoyltransferase from Methanopyrus kandleri (strain AV19 / DSM 6324 / JCM 9639 / NBRC 100938).